A 351-amino-acid polypeptide reads, in one-letter code: UDP-3-O-acylglucosamine N-acyltransferase (351 aa).

His-240 (proton acceptor) is an active-site residue.

It belongs to the transferase hexapeptide repeat family. LpxD subfamily. In terms of assembly, homotrimer.

The catalysed reaction is a UDP-3-O-[(3R)-3-hydroxyacyl]-alpha-D-glucosamine + a (3R)-hydroxyacyl-[ACP] = a UDP-2-N,3-O-bis[(3R)-3-hydroxyacyl]-alpha-D-glucosamine + holo-[ACP] + H(+). It participates in bacterial outer membrane biogenesis; LPS lipid A biosynthesis. Functionally, catalyzes the N-acylation of UDP-3-O-acylglucosamine using 3-hydroxyacyl-ACP as the acyl donor. Is involved in the biosynthesis of lipid A, a phosphorylated glycolipid that anchors the lipopolysaccharide to the outer membrane of the cell. The polypeptide is UDP-3-O-acylglucosamine N-acyltransferase (Pseudomonas savastanoi pv. phaseolicola (strain 1448A / Race 6) (Pseudomonas syringae pv. phaseolicola (strain 1448A / Race 6))).